A 783-amino-acid polypeptide reads, in one-letter code: Probable alpha,alpha-trehalose-phosphate synthase [UDP-forming] 3 (783 aa).

The glycosyltransferase stretch occupies residues 11–456; sequence QTLLVVANRL…GFDFLSELND (446 aa).

This sequence in the N-terminal section; belongs to the glycosyltransferase 20 family. The protein in the C-terminal section; belongs to the trehalose phosphatase family.

It catalyses the reaction D-glucose 6-phosphate + UDP-alpha-D-glucose = alpha,alpha-trehalose 6-phosphate + UDP + H(+). This Arabidopsis thaliana (Mouse-ear cress) protein is Probable alpha,alpha-trehalose-phosphate synthase [UDP-forming] 3 (TPS3).